The chain runs to 462 residues: Trigger factor (462 aa).

Residues 172 to 257 form the PPIase FKBP-type domain; the sequence is GDKATIDFVG…LKALAAPGET (86 aa). A disordered region spans residues 443–462; that stretch reads LLAADEEDEEEAAESSAALV. Over residues 444 to 455 the composition is skewed to acidic residues; it reads LAADEEDEEEAA.

This sequence belongs to the FKBP-type PPIase family. Tig subfamily.

The protein resides in the cytoplasm. The enzyme catalyses [protein]-peptidylproline (omega=180) = [protein]-peptidylproline (omega=0). In terms of biological role, involved in protein export. Acts as a chaperone by maintaining the newly synthesized protein in an open conformation. Functions as a peptidyl-prolyl cis-trans isomerase. In Methylocella silvestris (strain DSM 15510 / CIP 108128 / LMG 27833 / NCIMB 13906 / BL2), this protein is Trigger factor.